Here is a 393-residue protein sequence, read N- to C-terminus: Rubredoxin-NAD(+) reductase (393 aa).

FAD contacts are provided by residues 9–12, 33–34, Lys-42, Val-80, Glu-162, Asp-282, Val-294, and Lys-325; these read SGMA and CA.

This sequence belongs to the FAD-dependent oxidoreductase family. As to quaternary structure, homodimer. The cofactor is FAD.

It is found in the cytoplasm. The enzyme catalyses 2 reduced [rubredoxin] + NAD(+) + H(+) = 2 oxidized [rubredoxin] + NADH. The protein operates within hydrocarbon metabolism; alkane degradation. Involved in the hydrocarbon hydroxylating system, which transfers electrons from NADH to rubredoxin reductase and then through rubredoxin to alkane 1 monooxygenase. This is Rubredoxin-NAD(+) reductase (rubB) from Acinetobacter baylyi (strain ATCC 33305 / BD413 / ADP1).